The chain runs to 995 residues: UPF0182 protein MUL_2505 (995 aa).

The next 7 membrane-spanning stretches (helical) occupy residues 18–38 (VLILIALGVIALLLAGPRLID), 63–83 (FLVFLVAGVLVGGIVFAGLAL), 113–133 (LFGIGIPAAIGLLAGIVAQSY), 175–195 (FVAIFLAFVANVVSHYLFGGI), 210–230 (IQLVSLVGVLVLLKTVAYWLN), 259–279 (KLILMAIAVICAAAVFSAIVL), and 287–307 (IGLVLLLLSSLIVGAAWPMIV). Positions 900–947 (AATGIQPTEGGAPANVPPNNAPSPEALPGTPPSPPTAVPPAPEASVTL) are disordered. Residues 928–941 (GTPPSPPTAVPPAP) show a composition bias toward pro residues.

It belongs to the UPF0182 family.

The protein resides in the cell membrane. The protein is UPF0182 protein MUL_2505 of Mycobacterium ulcerans (strain Agy99).